The chain runs to 328 residues: Serine protease 27 (328 aa).

The N-terminal stretch at 1 to 22 is a signal peptide; the sequence is MRQPHIAALLLLPLLLRSGTEG. Residues 23-37 constitute a propeptide, activation peptide; the sequence is ARTLRACGHPKMFNR. A Peptidase S1 domain is found at 38–280; the sequence is MVGGENALEG…HHKWIHQIIP (243 aa). Cys63 and Cys79 are disulfide-bonded. His78 (charge relay system) is an active-site residue. N-linked (GlcNAc...) asparagine glycosylation occurs at Asn82. Asp127 (charge relay system) is an active-site residue. 3 disulfide bridges follow: Cys161-Cys238, Cys194-Cys217, and Cys228-Cys256. Residue Ser232 is the Charge relay system of the active site.

The protein belongs to the peptidase S1 family.

It localises to the secreted. This chain is Serine protease 27 (Prss27), found in Mus musculus (Mouse).